Reading from the N-terminus, the 100-residue chain is Large ribosomal subunit protein bL27 (100 aa).

Positions 1–9 are excised as a propeptide; that stretch reads MLSINLSLC.

The protein belongs to the bacterial ribosomal protein bL27 family. Post-translationally, the N-terminus is cleaved by ribosomal processing cysteine protease Prp.

This chain is Large ribosomal subunit protein bL27, found in Clostridium acetobutylicum (strain ATCC 824 / DSM 792 / JCM 1419 / IAM 19013 / LMG 5710 / NBRC 13948 / NRRL B-527 / VKM B-1787 / 2291 / W).